The following is a 170-amino-acid chain: 3-hydroxydecanoyl-[acyl-carrier-protein] dehydratase (170 aa).

His69 is an active-site residue.

It belongs to the thioester dehydratase family. FabA subfamily. In terms of assembly, homodimer.

The protein localises to the cytoplasm. The catalysed reaction is a (3R)-hydroxyacyl-[ACP] = a (2E)-enoyl-[ACP] + H2O. It carries out the reaction (3R)-hydroxydecanoyl-[ACP] = (2E)-decenoyl-[ACP] + H2O. The enzyme catalyses (2E)-decenoyl-[ACP] = (3Z)-decenoyl-[ACP]. It functions in the pathway lipid metabolism; fatty acid biosynthesis. Its function is as follows. Necessary for the introduction of cis unsaturation into fatty acids. Catalyzes the dehydration of (3R)-3-hydroxydecanoyl-ACP to E-(2)-decenoyl-ACP and then its isomerization to Z-(3)-decenoyl-ACP. Can catalyze the dehydratase reaction for beta-hydroxyacyl-ACPs with saturated chain lengths up to 16:0, being most active on intermediate chain length. The polypeptide is 3-hydroxydecanoyl-[acyl-carrier-protein] dehydratase (Idiomarina loihiensis (strain ATCC BAA-735 / DSM 15497 / L2-TR)).